Reading from the N-terminus, the 338-residue chain is Glycerol-3-phosphate dehydrogenase [NAD(P)+] (338 aa).

NADPH is bound by residues serine 13, tryptophan 14, and lysine 108. Lysine 108, glycine 139, and serine 141 together coordinate sn-glycerol 3-phosphate. Alanine 143 provides a ligand contact to NADPH. Sn-glycerol 3-phosphate contacts are provided by lysine 194, aspartate 247, serine 257, arginine 258, and asparagine 259. Lysine 194 (proton acceptor) is an active-site residue. Arginine 258 serves as a coordination point for NADPH. NADPH contacts are provided by valine 282 and glutamate 284.

It belongs to the NAD-dependent glycerol-3-phosphate dehydrogenase family.

It is found in the cytoplasm. It catalyses the reaction sn-glycerol 3-phosphate + NAD(+) = dihydroxyacetone phosphate + NADH + H(+). It carries out the reaction sn-glycerol 3-phosphate + NADP(+) = dihydroxyacetone phosphate + NADPH + H(+). It functions in the pathway membrane lipid metabolism; glycerophospholipid metabolism. Functionally, catalyzes the reduction of the glycolytic intermediate dihydroxyacetone phosphate (DHAP) to sn-glycerol 3-phosphate (G3P), the key precursor for phospholipid synthesis. This is Glycerol-3-phosphate dehydrogenase [NAD(P)+] from Streptococcus pyogenes serotype M2 (strain MGAS10270).